We begin with the raw amino-acid sequence, 352 residues long: Speedy protein E16 (352 aa).

Residues 1-90 (MDRTETRFRK…EPEKELAPEP (90 aa)) form a disordered region. The segment covering 18–40 (ITTSRQPHPQNEQSPQRSTSGYS) has biased composition (polar residues). Over residues 76–90 (DESEEEPEKELAPEP) the composition is skewed to acidic residues.

It belongs to the Speedy/Ringo family.

The sequence is that of Speedy protein E16 from Homo sapiens (Human).